A 157-amino-acid polypeptide reads, in one-letter code: Probable succinate transporter subunit YjjB (157 aa).

Transmembrane regions (helical) follow at residues 8–28 (FALAQDMILAAIPAVGFAMVF), 50–70 (MILMTSGLNIEWSTFMASMLV), 87–107 (VFTVAAVIPMFPGISAYTAMI), and 129–149 (FLTASSIVGALSIGLSIPGLW).

The protein belongs to the ThrE exporter (TC 2.A.79) family. In terms of assembly, the transporter is composed of YjjB and YjjP.

It is found in the cell inner membrane. Involved in succinate export with YjjP. Both proteins are required for export. In Escherichia coli (strain ATCC 8739 / DSM 1576 / NBRC 3972 / NCIMB 8545 / WDCM 00012 / Crooks), this protein is Probable succinate transporter subunit YjjB.